Here is a 144-residue protein sequence, read N- to C-terminus: Methylglyoxal synthase (144 aa).

The MGS-like domain maps to 1–144; the sequence is MNIALIAHDE…EEEQRKFLTD (144 aa). Substrate contacts are provided by residues His-8, Lys-12, 34-37, and 54-55; these read TGTT and SG. The active-site Proton donor/acceptor is Asp-60. His-87 lines the substrate pocket.

It belongs to the methylglyoxal synthase family.

The catalysed reaction is dihydroxyacetone phosphate = methylglyoxal + phosphate. Its function is as follows. Catalyzes the formation of methylglyoxal from dihydroxyacetone phosphate. The polypeptide is Methylglyoxal synthase (Exiguobacterium sibiricum (strain DSM 17290 / CCUG 55495 / CIP 109462 / JCM 13490 / 255-15)).